The primary structure comprises 121 residues: Small ribosomal subunit protein uS10 (121 aa).

At serine 2 the chain carries N-acetylserine. Glycyl lysine isopeptide (Lys-Gly) (interchain with G-Cter in ubiquitin) cross-links involve residues lysine 6, lysine 8, lysine 21, lysine 32, and lysine 101.

The protein belongs to the universal ribosomal protein uS10 family. As to quaternary structure, component of the small ribosomal subunit (SSU). Mature yeast ribosomes consist of a small (40S) and a large (60S) subunit. The 40S small subunit contains 1 molecule of ribosomal RNA (18S rRNA) and 33 different proteins (encoded by 57 genes). The large 60S subunit contains 3 rRNA molecules (25S, 5.8S and 5S rRNA) and 46 different proteins (encoded by 81 genes). Post-translationally, ubiquitinated at Lys-6 and Lys-8 by HEL2, to activate the ribosome quality control (RQC) pathway in response to stalled ribosomes. N-terminally acetylated by acetyltransferase NatA. Also partially acetylated by NatC.

The protein localises to the cytoplasm. In terms of biological role, component of the ribosome, a large ribonucleoprotein complex responsible for the synthesis of proteins in the cell. The small ribosomal subunit (SSU) binds messenger RNAs (mRNAs) and translates the encoded message by selecting cognate aminoacyl-transfer RNA (tRNA) molecules. The large subunit (LSU) contains the ribosomal catalytic site termed the peptidyl transferase center (PTC), which catalyzes the formation of peptide bonds, thereby polymerizing the amino acids delivered by tRNAs into a polypeptide chain. The nascent polypeptides leave the ribosome through a tunnel in the LSU and interact with protein factors that function in enzymatic processing, targeting, and the membrane insertion of nascent chains at the exit of the ribosomal tunnel. The sequence is that of Small ribosomal subunit protein uS10 from Saccharomyces cerevisiae (strain ATCC 204508 / S288c) (Baker's yeast).